The sequence spans 664 residues: uncharacterized protein (664 aa).

The first 35 residues, 1–35 (MGVSVLTFHVSLFLKRILSIAFFLLSLSTLLRIVN), serve as a signal peptide directing secretion. Residues Asn101 and Asn138 are each glycosylated (N-linked (GlcNAc...) asparagine). 2 Sel1-like repeats span residues 141 to 178 (AFAN…KQGS) and 179 to 214 (LDAH…DHLF). N-linked (GlcNAc...) asparagine glycans are attached at residues Asn221, Asn300, and Asn371. Sel1-like repeat units lie at residues 337 to 372 (AQSC…TKND), 373 to 409 (SNSY…MNEN), 410 to 441 (PHAL…TQKS), and 442 to 477 (VISY…EAIR). Asn454 and Asn537 each carry an N-linked (GlcNAc...) asparagine glycan. Sel1-like repeat units follow at residues 564 to 599 (IDAI…EQSS) and 601 to 636 (GMGL…SNQN).

This sequence belongs to the sel-1 family.

This is an uncharacterized protein from Schizosaccharomyces pombe (strain 972 / ATCC 24843) (Fission yeast).